Reading from the N-terminus, the 416-residue chain is Lipase (416 aa).

The signal sequence occupies residues 1-28; sequence MKCCRIMFVLLGLWFVFGLSVPGGRTEA. Ser-141 serves as the catalytic Nucleophile. Gly-314 is a Ca(2+) binding site. The Charge relay system role is filled by Asp-345. Residue Asp-385 coordinates Ca(2+). Catalysis depends on His-386, which acts as the Charge relay system. The Ca(2+) site is built by Glu-388, Asp-393, and Pro-394.

This sequence belongs to the AB hydrolase superfamily. Homodimer.

It is found in the secreted. It catalyses the reaction a triacylglycerol + H2O = a diacylglycerol + a fatty acid + H(+). Activity is inhibited by zinc and iron ions, and activated in vitro in 25% v/v DMSO and acetone. In terms of biological role, triacylglycerol hydrolase that shows hydrolysis preference towards some of the natural oils such as olive, sunflower and corn oils. This chain is Lipase, found in Bacillus sp.